A 302-amino-acid polypeptide reads, in one-letter code: MSTKFNVKTFQGMILALQEYWANQGCTIVQPFDMEVGAGTSHPMTALRALGPEPMAFAYVQPSRRPTDGRYGENPNRLQHYYQFQVVIKPSPDNIQELYLGSLEMLGFDPTKNDIRFVEDNWENPTLGAWGLGWEVWLNGMEVTQFTYFQQVGGLECKPVTGEVTYGLERLAMYIQGVDSVYDLVWSDGPLGKTTYGDVFHQNEVEQSTYNFEHANTDFLFYCFDQYEKEAQELLALEKPLPLPAYERILKAAHSFNLLDARKAISVTERQRYILRIRALTKGVAEAYYASREALGFPGCKK.

This sequence belongs to the class-II aminoacyl-tRNA synthetase family. Tetramer of two alpha and two beta subunits.

It is found in the cytoplasm. It catalyses the reaction tRNA(Gly) + glycine + ATP = glycyl-tRNA(Gly) + AMP + diphosphate. The protein is Glycine--tRNA ligase alpha subunit (glyQ) of Haemophilus influenzae (strain ATCC 51907 / DSM 11121 / KW20 / Rd).